Here is a 292-residue protein sequence, read N- to C-terminus: Nitrogenase iron protein 2 (292 aa).

An ATP-binding site is contributed by 8–15; it reads GKGGIGKS. Cysteine 106 is a [4Fe-4S] cluster binding site. Arginine 109 carries the ADP-ribosylarginine; by dinitrogenase reductase ADP-ribosyltransferase modification. Cysteine 142 contributes to the [4Fe-4S] cluster binding site.

The protein belongs to the NifH/BchL/ChlL family. Homodimer. [4Fe-4S] cluster is required as a cofactor. The reversible ADP-ribosylation of Arg-109 inactivates the nitrogenase reductase and regulates nitrogenase activity.

The enzyme catalyses N2 + 8 reduced [2Fe-2S]-[ferredoxin] + 16 ATP + 16 H2O = H2 + 8 oxidized [2Fe-2S]-[ferredoxin] + 2 NH4(+) + 16 ADP + 16 phosphate + 6 H(+). In terms of biological role, the key enzymatic reactions in nitrogen fixation are catalyzed by the nitrogenase complex, which has 2 components: the iron protein and the molybdenum-iron protein. In Methanothermococcus thermolithotrophicus (Methanococcus thermolithotrophicus), this protein is Nitrogenase iron protein 2 (nifH2).